The primary structure comprises 401 residues: Exodeoxyribonuclease 7 large subunit (401 aa).

The protein belongs to the XseA family. In terms of assembly, heterooligomer composed of large and small subunits.

The protein localises to the cytoplasm. The catalysed reaction is Exonucleolytic cleavage in either 5'- to 3'- or 3'- to 5'-direction to yield nucleoside 5'-phosphates.. In terms of biological role, bidirectionally degrades single-stranded DNA into large acid-insoluble oligonucleotides, which are then degraded further into small acid-soluble oligonucleotides. This Clostridium botulinum (strain Langeland / NCTC 10281 / Type F) protein is Exodeoxyribonuclease 7 large subunit.